The chain runs to 651 residues: Endoplasmic reticulum chaperone BiP (651 aa).

An N-terminal signal peptide occupies residues 1–20 (MGLSTYVGIFLLCILTLSRC). Residues 36–39 (GTTY), K96, 226–228 (GGT), 292–299 (EKAKRTLS), and 363–366 (GSTR) each bind ATP. Residues 125–279 (KPYMKVQVGS…KKKEGKDITK (155 aa)) are nucleotide-binding (NBD). Residues 399-499 (VQAGVISGVE…PRGLPQIEVT (101 aa)) form a substrate-binding (SBD) region. Positions 648-651 (KEEL) match the Prevents secretion from ER motif.

This sequence belongs to the heat shock protein 70 family.

It localises to the endoplasmic reticulum lumen. It catalyses the reaction ATP + H2O = ADP + phosphate + H(+). Its activity is regulated as follows. The chaperone activity is regulated by ATP-induced allosteric coupling of the nucleotide-binding (NBD) and substrate-binding (SBD) domains. In the ADP-bound and nucleotide-free (apo) states, the two domains have little interaction. In contrast, in the ATP-bound state the two domains are tightly coupled, which results in drastically accelerated kinetics in both binding and release of polypeptide substrates. J domain-containing co-chaperones stimulate the ATPase activity and are required for efficient substrate recognition. Endoplasmic reticulum chaperone that plays a key role in protein folding and quality control in the endoplasmic reticulum lumen. Involved in the correct folding of proteins and degradation of misfolded proteins. Acts as a key repressor of the unfolded protein response (UPR). The sequence is that of Endoplasmic reticulum chaperone BiP from Echinococcus granulosus (Hydatid tapeworm).